The following is a 394-amino-acid chain: Tryptophan synthase beta chain (394 aa).

At lysine 90 the chain carries N6-(pyridoxal phosphate)lysine.

It belongs to the TrpB family. As to quaternary structure, tetramer of two alpha and two beta chains. It depends on pyridoxal 5'-phosphate as a cofactor.

It catalyses the reaction (1S,2R)-1-C-(indol-3-yl)glycerol 3-phosphate + L-serine = D-glyceraldehyde 3-phosphate + L-tryptophan + H2O. Its pathway is amino-acid biosynthesis; L-tryptophan biosynthesis; L-tryptophan from chorismate: step 5/5. In terms of biological role, the beta subunit is responsible for the synthesis of L-tryptophan from indole and L-serine. The polypeptide is Tryptophan synthase beta chain (Parabacteroides distasonis (strain ATCC 8503 / DSM 20701 / CIP 104284 / JCM 5825 / NCTC 11152)).